Reading from the N-terminus, the 404-residue chain is Corticosteroid-binding globulin (404 aa).

Residues 1–30 (MAWSTRTMMSLALYTCFLWLLTSGLKTVQS) form the signal peptide. Residues Asn-95 and Asn-225 are each glycosylated (N-linked (GlcNAc...) asparagine). Residue Gln-253 coordinates cortisol. Asn-259 carries N-linked (GlcNAc...) asparagine glycosylation. Glu-285 lines the cortisol pocket. N-linked (GlcNAc...) asparagine glycosylation occurs at Asn-326. Cortisol is bound at residue Trp-392.

It belongs to the serpin family. In terms of tissue distribution, expressed by the liver; secreted in plasma.

The protein localises to the secreted. In terms of biological role, major transport protein for glucocorticoids and progestins in the blood of almost all vertebrate species. The chain is Corticosteroid-binding globulin (SERPINA6) from Mesocricetus auratus (Golden hamster).